We begin with the raw amino-acid sequence, 151 residues long: Cysteine protease inhibitor 5 (151 aa).

Disulfide bonds link Cys13/Cys65 and Cys114/Cys120.

It belongs to the protease inhibitor I3 (leguminous Kunitz-type inhibitor) family.

The protein localises to the vacuole. In terms of biological role, inhibitor of cysteine proteases. May protect the plant by inhibiting proteases of invading organisms. In Solanum tuberosum (Potato), this protein is Cysteine protease inhibitor 5.